A 1003-amino-acid polypeptide reads, in one-letter code: Glycine--tRNA ligase (1003 aa).

Residues 1-310 form a glycine--tRNA ligase alpha subunit region; the sequence is MSSQPLTLQT…VTPKKIPTIC (310 aa). Positions 311–1003 are glycine--tRNA ligase beta subunit; the sequence is QPEDFLLEIG…CFGFYAWGVL (693 aa).

Belongs to the class-II aminoacyl-tRNA synthetase family.

The protein resides in the cytoplasm. The enzyme catalyses tRNA(Gly) + glycine + ATP = glycyl-tRNA(Gly) + AMP + diphosphate. This chain is Glycine--tRNA ligase (glyQS), found in Chlamydia trachomatis serovar D (strain ATCC VR-885 / DSM 19411 / UW-3/Cx).